Here is a 377-residue protein sequence, read N- to C-terminus: Nitric oxide reductase FlRd-NAD(+) reductase (377 aa).

Belongs to the FAD-dependent oxidoreductase family. It depends on FAD as a cofactor.

Its subcellular location is the cytoplasm. It catalyses the reaction 2 reduced [nitric oxide reductase rubredoxin domain] + NAD(+) + H(+) = 2 oxidized [nitric oxide reductase rubredoxin domain] + NADH. Its pathway is nitrogen metabolism; nitric oxide reduction. Its function is as follows. One of at least two accessory proteins for anaerobic nitric oxide (NO) reductase. Reduces the rubredoxin moiety of NO reductase. In Escherichia coli O6:H1 (strain CFT073 / ATCC 700928 / UPEC), this protein is Nitric oxide reductase FlRd-NAD(+) reductase.